We begin with the raw amino-acid sequence, 299 residues long: ATP phosphoribosyltransferase (299 aa).

The protein belongs to the ATP phosphoribosyltransferase family. Long subfamily. As to quaternary structure, equilibrium between an active dimeric form, an inactive hexameric form and higher aggregates. Interconversion between the various forms is largely reversible and is influenced by the natural substrates and inhibitors of the enzyme. The cofactor is Mg(2+).

Its subcellular location is the cytoplasm. The catalysed reaction is 1-(5-phospho-beta-D-ribosyl)-ATP + diphosphate = 5-phospho-alpha-D-ribose 1-diphosphate + ATP. The protein operates within amino-acid biosynthesis; L-histidine biosynthesis; L-histidine from 5-phospho-alpha-D-ribose 1-diphosphate: step 1/9. With respect to regulation, feedback inhibited by histidine. Its function is as follows. Catalyzes the condensation of ATP and 5-phosphoribose 1-diphosphate to form N'-(5'-phosphoribosyl)-ATP (PR-ATP). Has a crucial role in the pathway because the rate of histidine biosynthesis seems to be controlled primarily by regulation of HisG enzymatic activity. This Erwinia tasmaniensis (strain DSM 17950 / CFBP 7177 / CIP 109463 / NCPPB 4357 / Et1/99) protein is ATP phosphoribosyltransferase.